Here is a 146-residue protein sequence, read N- to C-terminus: Hemoglobin subunit beta (146 aa).

Val1 is subject to N-acetylvaline. The Globin domain occupies 2 to 146 (HLTAEEKSAV…VANALAHKYH (145 aa)). The residue at position 44 (Ser44) is a Phosphoserine. Lys59 is subject to N6-acetyllysine. His63 serves as a coordination point for heme b. An N6-acetyllysine modification is found at Lys82. His92 lines the heme b pocket. Cys93 is subject to S-nitrosocysteine. An N6-acetyllysine modification is found at Lys144.

This sequence belongs to the globin family. In terms of assembly, heterotetramer of two alpha chains and two beta chains. Red blood cells.

Involved in oxygen transport from the lung to the various peripheral tissues. The polypeptide is Hemoglobin subunit beta (Tamias merriami (Merriam's chipmunk)).